The primary structure comprises 159 residues: Troponin C, skeletal muscle (159 aa).

N-acetylthreonine is present on Thr-1. 4 EF-hand domains span residues 14–49 (EMIAEFKAAFDMFDADGGGDISVKELGTVMRMLGQT), 50–85 (PTKEELDAIIEEVDEDGSGTIDFEEFLVMMVRQMKE), 90–125 (KSEEELAECFRIFDRNMDGYIDAEELAEIFRASGEH), and 126–159 (VTDEEIESIMKDGDKNNDGRIDFDEFLKMMEGVQ). Residues Asp-27, Asp-29, Asp-33, Glu-38, Asp-63, Asp-65, Ser-67, Thr-69, Glu-74, Asp-103, Asn-105, Asp-107, Tyr-109, Glu-114, Asp-139, Asn-141, Asp-143, Arg-145, and Glu-150 each coordinate Ca(2+).

Belongs to the troponin C family.

In terms of biological role, troponin is the central regulatory protein of striated muscle contraction. Tn consists of three components: Tn-I which is the inhibitor of actomyosin ATPase, Tn-T which contains the binding site for tropomyosin and Tn-C. The binding of calcium to Tn-C abolishes the inhibitory action of Tn on actin filaments. This chain is Troponin C, skeletal muscle (TNNC2), found in Sus scrofa (Pig).